A 214-amino-acid chain; its full sequence is Protein-L-isoaspartate O-methyltransferase (214 aa).

Serine 63 is an active-site residue.

Belongs to the methyltransferase superfamily. L-isoaspartyl/D-aspartyl protein methyltransferase family.

Its subcellular location is the cytoplasm. The enzyme catalyses [protein]-L-isoaspartate + S-adenosyl-L-methionine = [protein]-L-isoaspartate alpha-methyl ester + S-adenosyl-L-homocysteine. In terms of biological role, catalyzes the methyl esterification of L-isoaspartyl residues in peptides and proteins that result from spontaneous decomposition of normal L-aspartyl and L-asparaginyl residues. It plays a role in the repair and/or degradation of damaged proteins. The polypeptide is Protein-L-isoaspartate O-methyltransferase (Maridesulfovibrio salexigens (strain ATCC 14822 / DSM 2638 / NCIMB 8403 / VKM B-1763) (Desulfovibrio salexigens)).